A 297-amino-acid chain; its full sequence is Carboxysome assembly protein CcmO (297 aa).

Positions 1-29 are disordered; it reads MPTSPTMTSVPIARSPRPSYQQINQHQPS. The segment covering 18 to 29 has biased composition (polar residues); that stretch reads PSYQQINQHQPS. 2 consecutive BMC domains span residues 32–116 and 138–222; these read ALGL…AVFP and SIGL…HTLP.

The protein belongs to the bacterial microcompartments protein family. As to quaternary structure, homooligomerizes, possibly as a trimer, interacts with CcmK in the carboxysome.

Its subcellular location is the carboxysome. In terms of biological role, required for formation of the carboxysome, a polyhedral inclusion where RuBisCO (ribulose bisphosphate carboxylase, rbcL-rbcS) is sequestered. Required for recruitment of major shell protein CcmK2 to the pre-carboxysome. Suggested to be a carboxysome shell protein. The protein is Carboxysome assembly protein CcmO of Synechocystis sp. (strain ATCC 27184 / PCC 6803 / Kazusa).